Consider the following 149-residue polypeptide: Early lymphoid activation gene protein (149 aa).

In terms of tissue distribution, expressed in heart, kidney, lung, and skeletal muscle, with lower levels in pancreas and liver.

In terms of biological role, may function as an early signal that helps mediate the activation of T-cells. The protein is Early lymphoid activation gene protein (DIAPH2-AS1) of Homo sapiens (Human).